The following is a 470-amino-acid chain: Dendritic cell-specific transmembrane protein (470 aa).

The Cytoplasmic portion of the chain corresponds to 1 to 33; it reads MRLWTLGTSIFLRLWGTYVFPRSPSWLDFIQHL. A helical membrane pass occupies residues 34 to 54; it reads GVCCFVAFLSVSLFSAAFYWI. Residue Leu-55 is a topological domain, extracellular. A helical transmembrane segment spans residues 56 to 76; the sequence is PPVALLSSVWMITCVFLCCSK. The Cytoplasmic segment spans residues 77 to 97; the sequence is RARCFILLAVLSCGLREGRNA. A helical membrane pass occupies residues 98–118; it reads LIAAGTGVVIFGHVENIFYNF. Residues 119-209 are Extracellular-facing; the sequence is RGLLDSMTCN…MVVTTELLTS (91 aa). A helical membrane pass occupies residues 210–230; that stretch reads VGQKLLALAGLLLILVSTGLF. The Cytoplasmic portion of the chain corresponds to 231 to 292; sequence LKRFLGPCGW…LQLTPKEKKT (62 aa). The chain crosses the membrane as a helical span at residues 293–313; sequence LGLFFLPVLTYLYMWVLFAAV. Over 314–376 the chain is Extracellular; that stretch reads DYLLYRLISS…PKPRLSVSET (63 aa). A helical membrane pass occupies residues 377-397; the sequence is WVPLSIILLTLIILGLLSSML. The Cytoplasmic segment spans residues 398–470; that stretch reads MQLKILVSVS…QTIPANEDDL (73 aa).

As to quaternary structure, interacts with CREB3. Monomer. Homodimer. Isoform 1 interacts (via the C-terminus cytoplasmic tail) with OS9 isoform 1 (via the C-terminus tail); the interaction induces DCSTAMP redistribution to the endoplasmic reticulum-Golgi intermediate compartment. Isoform 1 interacts (via the C-terminus cytoplasmic tail) with OS9 isoform 2 (via the C-terminus tail). In terms of processing, glycosylated. As to expression, expressed in macrophages and bone marrow dendritic cells (BM-DC). Weakly expressed in the spleen and lymph node. Highly expressed in multi-nuclear osteoclasts compared to mono-nuclear macrophages. Expressed in foreign body giant cells (FBGCs). Isoform 1 and isoform 2 are expressed in osteoclasts.

The protein localises to the cell membrane. The protein resides in the endoplasmic reticulum membrane. It is found in the endoplasmic reticulum-Golgi intermediate compartment membrane. It localises to the endosome. Its function is as follows. Probable cell surface receptor that plays several roles in cellular fusion, cell differentiation, bone and immune homeostasis. Plays a role in TNFSF11-mediated osteoclastogenesis. Cooperates with OCSTAMP in modulating cell-cell fusion in both osteoclasts and foreign body giant cells (FBGCs). Participates in osteoclast bone resorption. Involved in inducing the expression of tartrate-resistant acid phosphatase in osteoclast precursors. Plays a role in haematopoietic stem cell differentiation of bone marrow cells toward the myeloid lineage. Inhibits the development of neutrophilic granulocytes. Plays also a role in the regulation of dendritic cell (DC) antigen presentation activity by controlling phagocytic activity. Involved in the maintenance of immune self-tolerance and avoidance of autoimmune reactions. This is Dendritic cell-specific transmembrane protein (Dcstamp) from Mus musculus (Mouse).